We begin with the raw amino-acid sequence, 166 residues long: Xanthine-guanine phosphoribosyltransferase (166 aa).

Residues R42–G43 and D99–T107 contribute to the 5-phospho-alpha-D-ribose 1-diphosphate site. D100 serves as a coordination point for Mg(2+). Positions 103 and 146 each coordinate guanine. Residues D103 and I146 each coordinate xanthine. GMP is bound by residues D103–T107 and W145–I146.

Belongs to the purine/pyrimidine phosphoribosyltransferase family. XGPT subfamily. In terms of assembly, homotetramer. Mg(2+) is required as a cofactor.

It is found in the cell inner membrane. The enzyme catalyses GMP + diphosphate = guanine + 5-phospho-alpha-D-ribose 1-diphosphate. The catalysed reaction is XMP + diphosphate = xanthine + 5-phospho-alpha-D-ribose 1-diphosphate. It carries out the reaction IMP + diphosphate = hypoxanthine + 5-phospho-alpha-D-ribose 1-diphosphate. Its pathway is purine metabolism; GMP biosynthesis via salvage pathway; GMP from guanine: step 1/1. It participates in purine metabolism; XMP biosynthesis via salvage pathway; XMP from xanthine: step 1/1. Purine salvage pathway enzyme that catalyzes the transfer of the ribosyl-5-phosphate group from 5-phospho-alpha-D-ribose 1-diphosphate (PRPP) to the N9 position of the 6-oxopurines guanine and xanthine to form the corresponding ribonucleotides GMP (guanosine 5'-monophosphate) and XMP (xanthosine 5'-monophosphate), with the release of PPi. To a lesser extent, also acts on hypoxanthine. In Mesorhizobium japonicum (strain LMG 29417 / CECT 9101 / MAFF 303099) (Mesorhizobium loti (strain MAFF 303099)), this protein is Xanthine-guanine phosphoribosyltransferase.